The sequence spans 493 residues: D-aminoacyl-tRNA deacylase (493 aa).

A compositionally biased stretch (basic and acidic residues) spans 22–37 (DLGDWERRDDPSRPDA). Disordered stretches follow at residues 22-44 (DLGDWERRDDPSRPDADGGGTYY) and 441-493 (PEGP…EPSE).

It belongs to the DtdA deacylase family. In terms of assembly, monomer. Requires Zn(2+) as cofactor.

The catalysed reaction is a D-aminoacyl-tRNA + H2O = a tRNA + a D-alpha-amino acid + H(+). It carries out the reaction glycyl-tRNA(Ala) + H2O = tRNA(Ala) + glycine + H(+). Its function is as follows. D-aminoacyl-tRNA deacylase with broad substrate specificity. By recycling D-aminoacyl-tRNA to D-amino acids and free tRNA molecules, this enzyme counteracts the toxicity associated with the formation of D-aminoacyl-tRNA entities in vivo. This chain is D-aminoacyl-tRNA deacylase, found in Halorubrum lacusprofundi (strain ATCC 49239 / DSM 5036 / JCM 8891 / ACAM 34).